Reading from the N-terminus, the 252-residue chain is 3-deoxy-manno-octulosonate cytidylyltransferase (252 aa).

It belongs to the KdsB family.

The protein localises to the cytoplasm. The catalysed reaction is 3-deoxy-alpha-D-manno-oct-2-ulosonate + CTP = CMP-3-deoxy-beta-D-manno-octulosonate + diphosphate. It functions in the pathway nucleotide-sugar biosynthesis; CMP-3-deoxy-D-manno-octulosonate biosynthesis; CMP-3-deoxy-D-manno-octulosonate from 3-deoxy-D-manno-octulosonate and CTP: step 1/1. It participates in bacterial outer membrane biogenesis; lipopolysaccharide biosynthesis. Functionally, activates KDO (a required 8-carbon sugar) for incorporation into bacterial lipopolysaccharide in Gram-negative bacteria. The protein is 3-deoxy-manno-octulosonate cytidylyltransferase of Trichlorobacter lovleyi (strain ATCC BAA-1151 / DSM 17278 / SZ) (Geobacter lovleyi).